The sequence spans 163 residues: MAEDGPQKQQLEMPLVLDQDLTQQMRLRVESLKQRGEKKQDGEKLIRPAESVYRLDFIQQQKLQFDHWNVVLDKPGKVTITGTSQNWTPDLTNLMTRQLLDPAAIFWRKEDSDAMDWNEADALEFGERLSDLAKIRKVMYFLITFGEGVEPANLKASVVFNQL.

The residue at position 2 (Ala-2) is an N-acetylalanine.

Belongs to the olfactory marker protein family. As to quaternary structure, interacts with BEX1 and BEX2. In terms of tissue distribution, uniquely associated with mature olfactory receptor neurons.

The protein resides in the cytoplasm. In terms of biological role, may act as a modulator of the olfactory signal-transduction cascade. The chain is Olfactory marker protein (Omp) from Mus musculus (Mouse).